The chain runs to 439 residues: C4-dicarboxylate transport protein (439 aa).

9 consecutive transmembrane segments (helical) span residues 10–30, 45–65, 77–97, 145–165, 185–205, 223–243, 290–310, 332–352, and 353–373; these read LYVQ…FYPP, LIKM…IAGM, LALL…LVLV, AFAK…GFAL, VLFA…FGAM, LMGT…GTIT, VVGL…AIYL, TLLA…GSGF, and IVLA…LALI. The segment at 415–439 is disordered; the sequence is LNGQTAEEASAPQALPDRMESRIHH.

The protein belongs to the dicarboxylate/amino acid:cation symporter (DAACS) (TC 2.A.23) family.

It is found in the cell inner membrane. Its function is as follows. Responsible for the transport of dicarboxylates such as succinate, fumarate, and malate from the periplasm across the membrane. This is C4-dicarboxylate transport protein from Verminephrobacter eiseniae (strain EF01-2).